The following is a 208-amino-acid chain: uncharacterized protein (208 aa).

Positions 118–134 are enriched in low complexity; it reads QYPNQYQQQPQQQQPGY. A disordered region spans residues 118-208; it reads QYPNQYQQQP…HKKEKNEIKE (91 aa). Residues 138–175 are compositionally biased toward polar residues; the sequence is NYNQPPVQLNKQAYDNYQQNDYKSNNQPNLAKENNISN. Positions 187–201 are enriched in basic residues; the sequence is KKEKKHSFFSKLHKK.

This is an uncharacterized protein from Dictyostelium discoideum (Social amoeba).